The following is a 286-amino-acid chain: tRNA (guanine-N(7)-)-methyltransferase (286 aa).

2 positions are modified to phosphoserine: Ser7 and Ser59. S-adenosyl-L-methionine-binding positions include Gly103, Glu126–Ile127, Asn161–Ala162, and Cys181. Asp184 is an active-site residue. Thr259–Glu261 contributes to the S-adenosyl-L-methionine binding site.

Belongs to the class I-like SAM-binding methyltransferase superfamily. TrmB family. Forms a complex with TRM82.

It is found in the nucleus. The enzyme catalyses guanosine(46) in tRNA + S-adenosyl-L-methionine = N(7)-methylguanosine(46) in tRNA + S-adenosyl-L-homocysteine. It participates in tRNA modification; N(7)-methylguanine-tRNA biosynthesis. Functionally, methyltransferase that catalyzes the formation of N(7)-methylguanine at position 46 (m7G46) in tRNA, a modification required to maintain stability of tRNAs; its absence resulting in tRNA decay. Both the D-stem and T-stem structures of tRNAs are required for efficient methyltransferase activity. The chain is tRNA (guanine-N(7)-)-methyltransferase from Saccharomyces cerevisiae (strain YJM789) (Baker's yeast).